The primary structure comprises 785 residues: Pre-rRNA-processing protein TSR1 homolog (785 aa).

A disordered region spans residues 1–59; it reads MSTTGHRAGVFKKPSKPHKSWKGKRTKGEITSENRGREGVKQLTRSAHSTHRTISKDAR. Residues 9 to 25 are compositionally biased toward basic residues; the sequence is GVFKKPSKPHKSWKGKR. Residues 26–40 are compositionally biased toward basic and acidic residues; that stretch reads TKGEITSENRGREGV. In terms of domain architecture, Bms1-type G spans 83-243; sequence APCLVTVVSL…LRILNETKKK (161 aa). The disordered stretch occupies residues 307–426; that stretch reads PHPLKAHNKT…GETTASEMMF (120 aa). Residues 376-409 are compositionally biased toward acidic residues; it reads LDDEDDEDEEDSDEDMDDSDNEEVEDDSEEEEPM.

Belongs to the TRAFAC class translation factor GTPase superfamily. Bms1-like GTPase family. TSR1 subfamily.

The protein localises to the nucleus. It localises to the nucleolus. In terms of biological role, required during maturation of the 40S ribosomal subunit in the nucleolus. This chain is Pre-rRNA-processing protein TSR1 homolog (tag-151), found in Caenorhabditis elegans.